Here is a 197-residue protein sequence, read N- to C-terminus: Fucoxanthin-chlorophyll a-c binding protein F, chloroplastic (197 aa).

The N-terminal 31 residues, 1-31, are a transit peptide targeting the chloroplast; the sequence is MKFAVFASLLASAAAFAPAQQSARTSVATNM. Transmembrane regions (helical) follow at residues 73–94, 114–134, and 174–196; these read ISMLAVVGYLVQENGIRLPGDI, ISTAGIAQIVAFIGFLEIAVM, and GRAAQMGILALMVHEKLGVSLIP.

Belongs to the fucoxanthin chlorophyll protein family. In terms of assembly, the LHC complex of chromophytic algae is composed of fucoxanthin, chlorophyll A and C bound non-covalently by fucoxanthin chlorophyll proteins (FCPs). The ratio of the pigments in lhc; fucoxanthin: chlorophyll C: chlorophyll A is (0.6-1): (0.1-0.3): (1).

Its subcellular location is the plastid. The protein localises to the chloroplast thylakoid membrane. Its function is as follows. The light-harvesting complex (LHC) functions as a light receptor, it captures and delivers excitation energy to photosystems with which it is closely associated. In chromophytic algae, LHC is associated with photosystem II, energy being transferred from fucoxanthin and chlorophyll C to chlorophyll A and the photosynthetic reaction centers where it is used to synthesize ATP and reducing power. This is Fucoxanthin-chlorophyll a-c binding protein F, chloroplastic (FCPF) from Phaeodactylum tricornutum (Diatom).